A 478-amino-acid chain; its full sequence is Cysteine--tRNA ligase (478 aa).

Cys-29 is a binding site for Zn(2+). The 'HIGH' region signature appears at 31–41 (ATVQSIPHIGH). Residues Cys-207, His-232, and Glu-236 each contribute to the Zn(2+) site. Positions 263–267 (KMSKS) match the 'KMSKS' region motif. ATP is bound at residue Lys-266.

The protein belongs to the class-I aminoacyl-tRNA synthetase family. In terms of assembly, monomer. Zn(2+) serves as cofactor.

Its subcellular location is the cytoplasm. It carries out the reaction tRNA(Cys) + L-cysteine + ATP = L-cysteinyl-tRNA(Cys) + AMP + diphosphate. This Corynebacterium jeikeium (strain K411) protein is Cysteine--tRNA ligase.